An 82-amino-acid polypeptide reads, in one-letter code: Ice-structuring protein B (82 aa).

The first 23 residues, 1–23, serve as a signal peptide directing secretion; the sequence is MALSLFTVGQLIFLFWTMRITEA. Residues 24–44 constitute a propeptide, removed by a dipeptidylpeptidase; sequence RPDPAAKAAPAAAAVPAAAAP. At Arg81 the chain carries Arginine amide.

The protein belongs to the type-I AFP family. In terms of processing, amidated. In terms of tissue distribution, detected in liver (at protein level).

It localises to the secreted. The protein localises to the extracellular space. Functionally, contributes to protect fish blood from freezing at subzero sea water temperatures. Lowers the blood freezing point. Binds to nascent ice crystals and prevents further growth. The polypeptide is Ice-structuring protein B (Pseudopleuronectes americanus (Winter flounder)).